A 169-amino-acid chain; its full sequence is Ribosome maturation factor RimM (169 aa).

A PRC barrel domain is found at 94-168 (EEGQYYYHQI…KVIVELLEGL (75 aa)).

The protein belongs to the RimM family. In terms of assembly, binds ribosomal protein uS19.

Its subcellular location is the cytoplasm. Its function is as follows. An accessory protein needed during the final step in the assembly of 30S ribosomal subunit, possibly for assembly of the head region. Essential for efficient processing of 16S rRNA. May be needed both before and after RbfA during the maturation of 16S rRNA. It has affinity for free ribosomal 30S subunits but not for 70S ribosomes. The sequence is that of Ribosome maturation factor RimM from Limosilactobacillus fermentum (strain NBRC 3956 / LMG 18251) (Lactobacillus fermentum).